A 186-amino-acid chain; its full sequence is Elongation factor P (186 aa).

The residue at position 33 (K33) is an N6-(3,6-diaminohexanoyl)-5-hydroxylysine.

This sequence belongs to the elongation factor P family. Post-translationally, may be beta-lysylated on the epsilon-amino group of Lys-33 by the combined action of EpmA and EpmB, and then hydroxylated on the C5 position of the same residue by EpmC (if this protein is present). Lysylation is critical for the stimulatory effect of EF-P on peptide-bond formation. The lysylation moiety may extend toward the peptidyltransferase center and stabilize the terminal 3-CCA end of the tRNA. Hydroxylation of the C5 position on Lys-33 may allow additional potential stabilizing hydrogen-bond interactions with the P-tRNA.

The protein localises to the cytoplasm. It participates in protein biosynthesis; polypeptide chain elongation. Involved in peptide bond synthesis. Alleviates ribosome stalling that occurs when 3 or more consecutive Pro residues or the sequence PPG is present in a protein, possibly by augmenting the peptidyl transferase activity of the ribosome. Modification of Lys-33 is required for alleviation. This is Elongation factor P from Acidithiobacillus ferrooxidans (strain ATCC 23270 / DSM 14882 / CIP 104768 / NCIMB 8455) (Ferrobacillus ferrooxidans (strain ATCC 23270)).